The chain runs to 657 residues: Tyramine beta-hydroxylase (657 aa).

The chain crosses the membrane as a helical span at residues 77–97 (VALLFLLVAYCGGVVHAGEIV). In terms of domain architecture, DOMON spans 103 to 214 (TNVTVKWHTD…GTTQFYIAAS (112 aa)). N-linked (GlcNAc...) asparagine glycans are attached at residues Asn104 and Asn143. The active site involves Tyr278. 2 cysteine pairs are disulfide-bonded: Cys280/Cys330 and Cys319/Cys342. His312 and His313 together coordinate Cu(2+). Cu(2+) contacts are provided by His380, His458, His460, and Met533. 3 disulfides stabilise this stretch: Cys437–Cys549, Cys441–Cys606, and Cys512–Cys534. Residue His458 is part of the active site. An N-linked (GlcNAc...) asparagine glycan is attached at Asn555.

The protein belongs to the copper type II ascorbate-dependent monooxygenase family. The cofactor is Cu(2+). Present in synaptic regions of RIC interneurons. Present in gonadal sheath cells of hermaphrodites (at protein level).

Its subcellular location is the membrane. The enzyme catalyses tyramine + L-ascorbate + O2 = (R)-octopamine + L-dehydroascorbate + H2O. Required for the conversion of tyramine to octopamine, a precursor of octapamine but probably itself a neurotransmitter. Involved in the regulation of egg laying, which is inhibited by tyramine. Due to its involvement in octopamine biosynthesis, also required for crtc-1-dependent regulation of AMPK-mediated longevity. This is Tyramine beta-hydroxylase from Caenorhabditis elegans.